Here is a 398-residue protein sequence, read N- to C-terminus: Phospholipase C (398 aa).

The N-terminal stretch at 1 to 26 (MKALKKVSNILCVLGLCTLMGGTSYA) is a signal peptide. 9 residues coordinate Zn(2+): W27, H37, D82, H94, H152, D156, H162, H174, and E178. The Zn-dependent PLC domain maps to 27–276 (WDGKKDGTGT…NEVSNGNTGD (250 aa)). The tract at residues 273–281 (NTGDNDSLT) is linker. In terms of domain architecture, PLAT spans 282–398 (NEFNIVLKTA…TGNETYYINK (117 aa)). G297, T298, D299, D319, N320, G322, N323, D324, and D363 together coordinate Ca(2+).

Belongs to the bacterial zinc-metallophospholipase C family. The cofactor is Ca(2+). Zn(2+) serves as cofactor.

Its subcellular location is the secreted. It carries out the reaction a 1,2-diacyl-sn-glycero-3-phosphocholine + H2O = phosphocholine + a 1,2-diacyl-sn-glycerol + H(+). In terms of biological role, bacterial hemolysins are exotoxins that attack blood cell membranes and cause cell rupture. Binds to eukaryotic membranes where it hydrolyzes phosphatidylcholine. This enzyme has 10-fold less activity towards sphingomyelin than its C.perfringens counterpart, is approximately 100-fold less hemolytic against mouse erythrocytes and at least 100-fold less toxic in mice. The protein is Phospholipase C (plc) of Paraclostridium bifermentans (Clostridium bifermentans).